Consider the following 305-residue polypeptide: PI-PLC X domain-containing protein 2 (305 aa).

In terms of domain architecture, PI-PLC X-box spans 42 to 215 (HLHNLPLSNL…NCQVLIFYHC (174 aa)). Residues His-57 and His-132 contribute to the active site.

Widely expressed.

Its subcellular location is the nucleus. It carries out the reaction a 1,2-diacyl-sn-glycero-3-phospho-(1D-myo-inositol) + H2O = 1D-myo-inositol 1-phosphate + a 1,2-diacyl-sn-glycerol + H(+). Its function is as follows. Catalyzes the hydrolysis of inositol from phosphatidylinositol (1,2-diacyl-sn-glycero-3-phospho-(1D-myo-inositol), PI). Could also hydrolyze various multi-phosphorylated derivatives of PI, such as phosphatidylinositol-4,5 bisphosphate (PIP2), releasing inositol-1,4,5-trisphosphate (IP3) and the protein kinase C activator diacylglycerol (DAG), therefore mediating cell signaling. This chain is PI-PLC X domain-containing protein 2 (PLCXD2), found in Homo sapiens (Human).